A 292-amino-acid chain; its full sequence is Galactinol synthase 2 (292 aa).

Residue K65 is part of the active site. Mn(2+) contacts are provided by D81, D83, and H218.

The protein belongs to the glycosyltransferase 8 family. Galactosyltransferase subfamily. Requires a divalent metal cation as cofactor. In terms of tissue distribution, present in phloem-associated intermediary cells. Weakly expressed in leaves.

Its subcellular location is the cytoplasm. The enzyme catalyses myo-inositol + UDP-alpha-D-galactose = alpha-D-galactosyl-(1-&gt;3)-1D-myo-inositol + UDP + H(+). May promote plant stress tolerance. Galactinol synthase mainly involved in the biosynthesis of transport raffinose family oligosaccharides (RFOs) that function as osmoprotectants. This chain is Galactinol synthase 2 (GOLS2), found in Ajuga reptans (Bugle).